Consider the following 229-residue polypeptide: Probable ribonuclease H (229 aa).

Residues 42–164 (LQDISLEFDK…ADFLANSAAK (123 aa)) form the RNase H type-1 domain. A divalent metal cation contacts are provided by glutamate 60, aspartate 87, and aspartate 156.

It belongs to the RNase H family. A divalent metal cation serves as cofactor.

It carries out the reaction Endonucleolytic cleavage to 5'-phosphomonoester.. In terms of biological role, endonuclease that specifically degrades the RNA of RNA-DNA hybrids. The sequence is that of Probable ribonuclease H (RNH1) from Acanthamoeba polyphaga mimivirus (APMV).